The following is a 230-amino-acid chain: Ropporin-1-like protein (230 aa).

In terms of domain architecture, RIIa spans 17–54 (PELPDILKQFTKAAIRTQPADVLQWSAGYFSALSRGDP).

The protein belongs to the ropporin family. As to quaternary structure, component of the axonemal radial spoke complex 1 (RS1), at least composed of spoke head proteins RSPH1, RSPH3, RSPH9 and the cilia-specific component RSPH4A or sperm-specific component RSPH6A, spoke stalk proteins RSPH14, DNAJB13, DYDC1, ROPN1L and NME5, and the anchor protein IQUB. May interact with AKAP3. Interacts with FSCB; the interaction increases upon spermatozoa capacitation conditions. Interacts with CFAP61. Post-translationally, sumoylated, sumoylation decreases upon spermatozoa capacitation conditions.

The protein resides in the cell projection. Its subcellular location is the cilium. The protein localises to the flagellum. Functionally, functions as part of axonemal radial spoke complexes that play an important part in the motility of sperm and cilia. Important for male fertility. With ROPN1, involved in fibrous sheath integrity and sperm motility, plays a role in PKA-dependent signaling processes required for spermatozoa capacitation. This Macaca fascicularis (Crab-eating macaque) protein is Ropporin-1-like protein (ROPN1L).